Consider the following 62-residue polypeptide: Photosystem II reaction center protein Z (62 aa).

The next 2 membrane-spanning stretches (helical) occupy residues 8-28 (ALFALVALSFLLVVGVPVAFA) and 41-61 (FQGVSAWFALVFTVGVLNSLV).

Belongs to the PsbZ family. PSII is composed of 1 copy each of membrane proteins PsbA, PsbB, PsbC, PsbD, PsbE, PsbF, PsbH, PsbI, PsbJ, PsbK, PsbL, PsbM, PsbT, PsbY, PsbZ, Psb30/Ycf12, at least 3 peripheral proteins of the oxygen-evolving complex and a large number of cofactors. It forms dimeric complexes.

It is found in the plastid. Its subcellular location is the chloroplast thylakoid membrane. Functionally, may control the interaction of photosystem II (PSII) cores with the light-harvesting antenna, regulates electron flow through the 2 photosystem reaction centers. PSII is a light-driven water plastoquinone oxidoreductase, using light energy to abstract electrons from H(2)O, generating a proton gradient subsequently used for ATP formation. The polypeptide is Photosystem II reaction center protein Z (Nephroselmis olivacea (Green alga)).